We begin with the raw amino-acid sequence, 509 residues long: MAERAALEELVKLQGERVRGLKQQKASAELIEEEVAKLLKLKAQLGPDESKQKFVLKTPKGTRDYSPRQMAVREKVFDVIIRCFKRHGAEVIDTPVFELKETLMGKYGEDSKLIYDLKDQGGELLSLRYDLTVPFARYLAMNKLTNIKRYHIAKVYRRDNPAMTRGRYREFYQCDFDIAGNFDPMIPDAECLKIMCEILSSLQIGDFLVKVNDRRILDGMFAICGVSDSKFRTICSSVDKLDKVSWEEVKNEMVGEKGLAPEVADRIGDYVQQHGGVSLVEQLLQDPKLSQSKQALEGLGDLKLLFEYLTLFGIDDKISFDLSLARGLDYYTGVIYEAVLLQTPAQAGEEPLGVGSVAAGGRYDGLVGMFDPKGRKVPCVGLSIGVERIFSIVEQRLEALEEKVRTTETQVLVASAQKKLLEERLKLVSELWDAGIKAELLYKKNPKLLNQLQYCEEAGIPLVAIIGEQELEDGVIKLRSVTSREEVDVRREDLVEEIKRRTGQPLCIC.

Ala-2 is modified (N-acetylalanine). The WHEP-TRS domain occupies 3–59 (ERAALEELVKLQGERVRGLKQQKASAELIEEEVAKLLKLKAQLGPDESKQKFVLKTP). Residue Ser-66 is modified to Phosphoserine. Residues 130-132 (DLT), Arg-157, Gln-173, Asp-177, Arg-326, and 330-331 (YY) contribute to the L-histidine site. Ser-356 carries the post-translational modification Phosphoserine.

Belongs to the class-II aminoacyl-tRNA synthetase family. Homodimer.

Its subcellular location is the cytoplasm. It carries out the reaction tRNA(His) + L-histidine + ATP = L-histidyl-tRNA(His) + AMP + diphosphate + H(+). Functionally, catalyzes the ATP-dependent ligation of histidine to the 3'-end of its cognate tRNA, via the formation of an aminoacyl-adenylate intermediate (His-AMP). Plays a role in axon guidance. This chain is Histidine--tRNA ligase, cytoplasmic (HARS1), found in Pongo abelii (Sumatran orangutan).